We begin with the raw amino-acid sequence, 24 residues long: MATGGFGCLLLLIREIDLSVKRQI.

Belongs to the humanin family. In terms of tissue distribution, expressed in testis.

The protein localises to the secreted. The protein resides in the cytoplasm. Its function is as follows. Plays a role as a neuroprotective and antiapoptotic factor. The chain is Humanin-like 7 from Homo sapiens (Human).